The primary structure comprises 300 residues: tRNA-cytidine(32) 2-sulfurtransferase (300 aa).

The PP-loop motif motif lies at 57–62 (SGGKDS). [4Fe-4S] cluster-binding residues include Cys-132, Cys-135, and Cys-223.

It belongs to the TtcA family. In terms of assembly, homodimer. It depends on Mg(2+) as a cofactor. [4Fe-4S] cluster serves as cofactor.

Its subcellular location is the cytoplasm. It catalyses the reaction cytidine(32) in tRNA + S-sulfanyl-L-cysteinyl-[cysteine desulfurase] + AH2 + ATP = 2-thiocytidine(32) in tRNA + L-cysteinyl-[cysteine desulfurase] + A + AMP + diphosphate + H(+). The protein operates within tRNA modification. Catalyzes the ATP-dependent 2-thiolation of cytidine in position 32 of tRNA, to form 2-thiocytidine (s(2)C32). The sulfur atoms are provided by the cysteine/cysteine desulfurase (IscS) system. This Xanthomonas campestris pv. campestris (strain 8004) protein is tRNA-cytidine(32) 2-sulfurtransferase.